We begin with the raw amino-acid sequence, 461 residues long: Argininosuccinate lyase (461 aa).

It belongs to the lyase 1 family. Argininosuccinate lyase subfamily.

It localises to the cytoplasm. It catalyses the reaction 2-(N(omega)-L-arginino)succinate = fumarate + L-arginine. Its pathway is amino-acid biosynthesis; L-arginine biosynthesis; L-arginine from L-ornithine and carbamoyl phosphate: step 3/3. Strongly inhibited by L-arginine. Inhibitory effects are lowered at pH 7.0 compared to those at pH 8.0. At 45 degrees Celsius and pH 8.0, activity decreases to 94%, 74% and 37% in the presence of 0.6 mM, 2.8 mM and 10 mM arginine, respectively. Activity also decreases to 86% in the presence of 10 mM sodium succinate or sodium citrate. Activity does not decrease in the presence of 1 mM or 10 mM L-lysine, which has a similar structure to arginine. In terms of biological role, catalyzes the last step of arginine biosynthesis, the conversion of argininosuccinate into L-arginine and fumarate. This chain is Argininosuccinate lyase, found in Synechocystis sp. (strain ATCC 27184 / PCC 6803 / Kazusa).